Consider the following 59-residue polypeptide: UPF0434 protein SO_2800 (59 aa).

The protein belongs to the UPF0434 family.

The chain is UPF0434 protein SO_2800 from Shewanella oneidensis (strain ATCC 700550 / JCM 31522 / CIP 106686 / LMG 19005 / NCIMB 14063 / MR-1).